Here is a 185-residue protein sequence, read N- to C-terminus: Ribosome-recycling factor (185 aa).

The protein belongs to the RRF family.

Its subcellular location is the cytoplasm. In terms of biological role, responsible for the release of ribosomes from messenger RNA at the termination of protein biosynthesis. May increase the efficiency of translation by recycling ribosomes from one round of translation to another. This chain is Ribosome-recycling factor, found in Pseudomonas putida (strain ATCC 700007 / DSM 6899 / JCM 31910 / BCRC 17059 / LMG 24140 / F1).